The sequence spans 454 residues: Glutamyl-tRNA(Gln) amidotransferase subunit A (454 aa).

Residues lysine 56 and serine 131 each act as charge relay system in the active site. The active-site Acyl-ester intermediate is the serine 155.

This sequence belongs to the amidase family. GatA subfamily. Heterotrimer of A, B and C subunits.

The catalysed reaction is L-glutamyl-tRNA(Gln) + L-glutamine + ATP + H2O = L-glutaminyl-tRNA(Gln) + L-glutamate + ADP + phosphate + H(+). Functionally, allows the formation of correctly charged Gln-tRNA(Gln) through the transamidation of misacylated Glu-tRNA(Gln) in organisms which lack glutaminyl-tRNA synthetase. The reaction takes place in the presence of glutamine and ATP through an activated gamma-phospho-Glu-tRNA(Gln). In Campylobacter lari (strain RM2100 / D67 / ATCC BAA-1060), this protein is Glutamyl-tRNA(Gln) amidotransferase subunit A.